The sequence spans 89 residues: Extender of the chronological lifespan protein ecl3 (89 aa).

It belongs to the ecl1 family.

It localises to the nucleus. Functionally, involved in chronological cell aging. The sequence is that of Extender of the chronological lifespan protein ecl3 (ecl3) from Schizosaccharomyces pombe (strain 972 / ATCC 24843) (Fission yeast).